The following is a 157-amino-acid chain: Transcriptional repressor NrdR (157 aa).

Residues 1–21 (MKCPHCGNNGSRVVDSRPTDE) are disordered. Residues 3 to 34 (CPHCGNNGSRVVDSRPTDEGRVIRRRRECEKC) fold into a zinc finger. Residues 49 to 139 (LLVIKKNGSR…VYRQFKDMHV (91 aa)) form the ATP-cone domain.

It belongs to the NrdR family. Zn(2+) is required as a cofactor.

Functionally, negatively regulates transcription of bacterial ribonucleotide reductase nrd genes and operons by binding to NrdR-boxes. This is Transcriptional repressor NrdR from Pediococcus pentosaceus (strain ATCC 25745 / CCUG 21536 / LMG 10740 / 183-1w).